Here is a 301-residue protein sequence, read N- to C-terminus: Triplex capsid protein 2 (301 aa).

It belongs to the herpesviridae TRX2 protein family. Interacts with TRX1 and major capisd protein/MCP.

It is found in the virion. Its subcellular location is the host nucleus. Structural component of the T=16 icosahedral capsid. The capsid is composed of pentamers and hexamers of major capsid protein/MCP, which are linked together by heterotrimers called triplexes. These triplexes are formed by a single molecule of triplex protein 1/TRX1 and two copies of triplex protein 2/TRX2. Additionally, TRX1 is required for efficient transport of TRX2 to the nucleus, which is the site of capsid assembly. The chain is Triplex capsid protein 2 from Homo sapiens (Human).